Consider the following 897-residue polypeptide: MNISGSSCGSPNSADTSSDFKDLWTKLKECHDREVQGLQVKVTKLKQERILDAQRLEEFFTKNQQLREQQKVLHETIKVLEDRLRAGLCDRCAVTEEHMRKKQQEFENIRQQNLKLITELMNERNTLQEENKKLSEQLQQKIENDQQHQAAELECEEDVIPDSPITAFSFSGVNRLRRKENPHVRYIEQTHTKLEHSVCANEMRKVSKSSTHPQHNPNENEILVADTYDQSQSPMAKAHGTSSYTPDKSSFNLATVVAETLGLGVQEESETQGPMSPLGDELYHCLEGNHKKQPFEESTRNTEDSLRFSDSTSKTPPQEELPTRVSSPVFGATSSIKSGLDLNTSLSPSLLQPGKKKHLKTLPFSNTCISRLEKTRSKSEDSALFTHHSLGSEVNKIIIQSSNKQILINKNISESLGEQNRTEYGKDSNTDKHLEPLKSLGGRTSKRKKTEEESEHEVSCPQASFDKENAFPFPMDNQFSMNGDCVMDKPLDLSDRFSAIQRQEKSQGSETSKNKFRQVTLYEALKTIPKGFSSSRKASDGNCTLPKDSPGEPCSQECIILQPLNKCSPDNKPSLQIKEENAVFKIPLRPRESLETENVLDDIKSAGSHEPIKIQTRSDHGGCELASVLQLNPCRTGKIKSLQNNQDVSFENIQWSIDPGADLSQYKMDVTVIDTKDGSQSKLGGETVDMDCTLVSETVLLKMKKQEQKGEKSSNEERKMNDSLEDMFDRTTHEEYESCLADSFSQAADEEEELSTATKKLHTHGDKQDKVKQKAFVEPYFKGDERETSLQNFPHIEVVRKKEERRKLLGHTCKECEIYYADMPAEEREKKLASCSRHRFRYIPPNTPENFWEVGFPSTQTCMERGYIKEDLDPCPRPKRRQPYNAIFSPKGKEQKT.

Positions 22–45 are essential for binding to the MRN complex and for RPA focus formation on DNA damage; it reads DLWTKLKECHDREVQGLQVKVTKL. Residues 35–84 adopt a coiled-coil conformation; that stretch reads VQGLQVKVTKLKQERILDAQRLEEFFTKNQQLREQQKVLHETIKVLEDRL. Residues 45–160 are required for interaction with LMO4, probably by stabilizing the interaction through RPPB8 dimerization; it reads LKQERILDAQ…AELECEEDVI (116 aa). Residues lysine 62 and lysine 115 each participate in a glycyl lysine isopeptide (Lys-Gly) (interchain with G-Cter in SUMO2) cross-link. Residues 117–138 are a coiled coil; the sequence is ITELMNERNTLQEENKKLSEQL. Lysine 193 participates in a covalent cross-link: Glycyl lysine isopeptide (Lys-Gly) (interchain with G-Cter in SUMO2). Phosphoserine occurs at positions 233 and 276. Basic and acidic residues predominate over residues 292-307; that stretch reads KQPFEESTRNTEDSLR. Residues 292 to 325 are disordered; sequence KQPFEESTRNTEDSLRFSDSTSKTPPQEELPTRV. Residue threonine 315 is modified to Phosphothreonine; by CDK2. Phosphoserine occurs at positions 326, 327, and 349. Glycyl lysine isopeptide (Lys-Gly) (interchain with G-Cter in SUMO2) cross-links involve residues lysine 360 and lysine 378. Serine 379 is subject to Phosphoserine. Residues lysine 396, lysine 404, and lysine 410 each participate in a glycyl lysine isopeptide (Lys-Gly) (interchain with G-Cter in SUMO2) cross-link. The tract at residues 419-464 is disordered; sequence QNRTEYGKDSNTDKHLEPLKSLGGRTSKRKKTEEESEHEVSCPQAS. A compositionally biased stretch (basic and acidic residues) spans 420 to 436; that stretch reads NRTEYGKDSNTDKHLEP. Glycyl lysine isopeptide (Lys-Gly) (interchain with G-Cter in SUMO2) cross-links involve residues lysine 438 and lysine 449. Positions 490 to 494 match the PXDLS motif motif; it reads PLDLS. Residues 509–557 are damage-recruitment motif; that stretch reads SETSKNKFRQVTLYEALKTIPKGFSSSRKASDGNCTLPKDSPGEPCSQE. Lysine 526 participates in a covalent cross-link: Glycyl lysine isopeptide (Lys-Gly) (interchain with G-Cter in SUMO2); alternate. Glycyl lysine isopeptide (Lys-Gly) (interchain with G-Cter in SUMO2) cross-links involve residues lysine 530, lysine 572, and lysine 578. Residue lysine 604 forms a Glycyl lysine isopeptide (Lys-Gly) (interchain with G-Cter in SUMO2); alternate linkage. Residues lysine 613, lysine 638, and lysine 640 each participate in a glycyl lysine isopeptide (Lys-Gly) (interchain with G-Cter in SUMO2) cross-link. The interval 641–685 is required for interaction with LMO4, probably by making physical contact with LMO4; sequence SLQNNQDVSFENIQWSIDPGADLSQYKMDVTVIDTKDGSQSKLGG. Phosphoserine; by ATM is present on serine 664. Lysine 676 is covalently cross-linked (Glycyl lysine isopeptide (Lys-Gly) (interchain with G-Cter in SUMO2)). Serine 679 carries the phosphoserine modification. The segment at 704-723 is disordered; it reads KKQEQKGEKSSNEERKMNDS. Lysine 719 is covalently cross-linked (Glycyl lysine isopeptide (Lys-Gly) (interchain with G-Cter in SUMO2)). Serine 723 carries the phosphoserine modification. A Phosphoserine; by ATM modification is found at serine 745. Residue lysine 782 forms a Glycyl lysine isopeptide (Lys-Gly) (interchain with G-Cter in SUMO2) linkage. Residues 840–842 carry the KLHL15-binding motif; it reads FRY. Phosphothreonine; by CDK1 is present on threonine 847. Threonine 859 is modified (phosphothreonine; by ATR). Lysine 869 participates in a covalent cross-link: Glycyl lysine isopeptide (Lys-Gly) (interchain with G-Cter in SUMO2). The segment at 873–897 is disordered; the sequence is DPCPRPKRRQPYNAIFSPKGKEQKT.

This sequence belongs to the COM1/SAE2/CtIP family. Homotetramer; formed by antiparallel association of helical extensions protruding from the N-termini of two parallel coiled-coil dimers. Forms a dumbbell-shaped particle in which polar globular domains are held about 30 nm apart by a central rod. Homotetramerization is required for DNA-end resection and repair. Interacts (via the PXDLS motif) with CTBP1; the interaction is disrupted via binding of the adenovirus E1A to CTBP1. Component of the BRCA1-RBBP8 complex. Interacts (the Ser-327 phosphorylated form) with BRCA1 (via the C-terminal BRCT domains): the interaction occurs in the G2 phase, ubiquitinates RBBP8 and involves RBBP8 in BRCA1-dependent G2/M checkpoint control on DNA damage. Interacts with RB1. Interacts with the MRN complex; interacts directly with MRE11; the interaction is required for efficient homologous recombination (HR) and regulation of the MRN complex. Interacts directly with RAD50. Interacts (when phosphorylated by CDK1) with NBN; promoting association with the MRN complex. Interacts with LM04 (via the LIM zinc-binding 1 domain). Interacts with SIAH1. Interacts with RNF138. Interacts with EXD2. Interacts with CUL3 and KLHL15; this interaction leads to RBBP8 proteasomal degradation. Directly interacts with PIN1; this interaction depends upon RBBP8 phosphorylation, predominantly at Thr-315. Interacts with FZR1; this interaction leads to APC/C-mediated RBBP8 proteasomal degradation. Interacts with AUNIP; leading to recruitment of RBBP8 to sites of DNA damage. Interacts with SAMHD1. Interacts with HDGFL2. Hyperphosphorylation upon ionizing radiation results in dissociation from BRCA1. Phosphorylation at Thr-847 by CDK1 is essential for the recruitment to DNA and the DNA repair function. Phosphorylation at Thr-847 and Thr-859 promote interaction with NBN and recruitment to double-strand breaks (DSBs). Phosphorylated on Ser-327 as cells enter G2 phase. This phosphorylation is required for binding BRCA1 and for the G2/M DNA damage transition checkpoint control. Phosphorylation at Thr-315, probably catalyzed by CDK2, is required for PIN1-binding, while phosphorylation at Ser-276 serves as a PIN1 isomerization site. Phosphorylation at Thr-315 is cell-cycle dependent. It steadily increases during S phase, peaks at late S/G2 phase, and drops at G1. Phosphorylation is not required for tetramerization. Binds to DNA more strongly when dephosphorylated. Post-translationally, ubiquitinated. Ubiquitination at multiple sites by BRCA1 (via its N-terminal RING domain) does not lead to its proteasomal degradation but instead the ubiquitinated RBBP8 binds to chromatin following DNA damage and may play a role in G2/M checkpoint control. Ubiquitinated by RNF138 at its N-terminus. Ubiquitinated through 'Lys-48' by the E3 CUL3-KLHL15 complex; this modification leads to proteasomal degradation. Ubiquitinated by the E3 FZR1/APC/C complex; this modification leads to proteasomal degradation. In terms of tissue distribution, expressed in ER-positive breast cancer lines, but tends to be down-regulated ER-negative cells (at protein level).

It localises to the nucleus. It is found in the chromosome. In terms of biological role, endonuclease that cooperates with the MRE11-RAD50-NBN (MRN) complex in DNA-end resection, the first step of double-strand break (DSB) repair through the homologous recombination (HR) pathway. HR is restricted to S and G2 phases of the cell cycle and preferentially repairs DSBs resulting from replication fork collapse. Key determinant of DSB repair pathway choice, as it commits cells to HR by preventing classical non-homologous end-joining (NHEJ). Specifically promotes the endonuclease activity of the MRN complex to clear DNA ends containing protein adducts: recruited to DSBs by NBN following phosphorylation by CDK1, and promotes the endonuclease activity of MRE11 to clear protein-DNA adducts and generate clean double-strand break ends. Functions downstream of the MRN complex and ATM, promotes ATR activation and its recruitment to DSBs in the S/G2 phase facilitating the generation of ssDNA. Component of the BRCA1-RBBP8 complex that regulates CHEK1 activation and controls cell cycle G2/M checkpoints on DNA damage. During immunoglobulin heavy chain class-switch recombination, promotes microhomology-mediated alternative end joining (A-NHEJ) and plays an essential role in chromosomal translocations. Binds preferentially to DNA Y-junctions and to DNA substrates with blocked ends and promotes intermolecular DNA bridging. The protein is DNA endonuclease RBBP8 (RBBP8) of Homo sapiens (Human).